The primary structure comprises 362 residues: 4-hydroxy-3-methylbut-2-en-1-yl diphosphate synthase (flavodoxin) (362 aa).

[4Fe-4S] cluster is bound by residues cysteine 266, cysteine 269, cysteine 301, and glutamate 308.

This sequence belongs to the IspG family. [4Fe-4S] cluster serves as cofactor.

It catalyses the reaction (2E)-4-hydroxy-3-methylbut-2-enyl diphosphate + oxidized [flavodoxin] + H2O + 2 H(+) = 2-C-methyl-D-erythritol 2,4-cyclic diphosphate + reduced [flavodoxin]. Its pathway is isoprenoid biosynthesis; isopentenyl diphosphate biosynthesis via DXP pathway; isopentenyl diphosphate from 1-deoxy-D-xylulose 5-phosphate: step 5/6. Converts 2C-methyl-D-erythritol 2,4-cyclodiphosphate (ME-2,4cPP) into 1-hydroxy-2-methyl-2-(E)-butenyl 4-diphosphate. In Malacoplasma penetrans (strain HF-2) (Mycoplasma penetrans), this protein is 4-hydroxy-3-methylbut-2-en-1-yl diphosphate synthase (flavodoxin).